Here is a 2349-residue protein sequence, read N- to C-terminus: Reducing polyketide synthase AFT16-1 (2349 aa).

A compositionally biased stretch (basic and acidic residues) spans 1–14 (MNGKSRDNGHDGKR). Disordered stretches follow at residues 1-21 (MNGKSRDNGHDGKRQPVVPAE) and 37-80 (TNPS…TSNS). Residues 20-462 (AEPIAIVGTA…GTNAHTILES (443 aa)) enclose the Ketosynthase family 3 (KS3) domain. Residues cysteine 194, histidine 333, and histidine 382 each act as for beta-ketoacyl synthase activity in the active site. Residues 578–888 (VFTGQGAQWP…LLYKGVLERF (311 aa)) form a malonyl-CoA:ACP transacylase (MAT) domain region. The N-terminal hotdog fold stretch occupies residues 958-1092 (HPLLGFRSVD…GDILLSHFAK (135 aa)). The tract at residues 958 to 1263 (HPLLGFRSVD…QVEGLKFSCM (306 aa)) is dehydratase (DH) domain. Positions 958 to 1269 (HPLLGFRSVD…FSCMYPAQET (312 aa)) constitute a PKS/mFAS DH domain. Histidine 990 functions as the Proton acceptor; for dehydratase activity in the catalytic mechanism. Residues 1111–1269 (MSSVEPSLFY…FSCMYPAQET (159 aa)) form a C-terminal hotdog fold region. Aspartate 1170 serves as the catalytic Proton donor; for dehydratase activity. A ketoreductase (KR) domain region spans residues 1976-2164 (SPNKTYLLVG…VVGVGYVARA (189 aa)). The region spanning 2273–2347 (EILSGSLKQK…GLCLEAIGQW (75 aa)) is the Carrier domain. Serine 2307 is modified (O-(pantetheine 4'-phosphoryl)serine).

It participates in mycotoxin biosynthesis. Functionally, reducing polyketide synthase; part of the gene clusters that mediate the biosynthesis of the host-selective toxins (HSTs) AF-toxins responsible for Alternaria black spot of strawberry disease by the strawberry pathotype. AF-toxin I and III are valine derivatives of 2,3-dyhydroxy-isovaleric acid and 2-hydroxy-isovaleric acid respectively, while AF II is an isoleucine derivative of 2-hydroxy-valeric acid. These derivatives are bound to a 9,10-epoxy-8-hydroxy-9-methyl-decatrienoic acid (EDA) moiety. On cellular level, AF-toxins affect plasma membrane of susceptible cells and cause a sudden increase in loss of K(+) after a few minutes of toxin treatment. The aldo-keto reductase AFTS1 catalyzes the conversion of 2-keto-isovaleric acid (2-KIV) to 2-hydroxy-isovaleric acid (2-HIV) by reduction of its ketone to an alcohol. The acyl-CoA ligase AFT1, the hydrolase AFT2 and the enoyl-CoA hydratases AFT3 and AFT6, but also the polyketide synthase AFT9, the acyl-CoA dehydrogenase AFT10, the cytochrome P450 monooxygenase AFT11 and the oxidoreductase AFT12 are all involved in the biosynthesis of the AK-, AF- and ACT-toxin common EDA structural moiety. The exact function of each enzyme, and of additional enzymes identified within the AF-toxin clusters have still to be determined. This is Reducing polyketide synthase AFT16-1 from Alternaria alternata (Alternaria rot fungus).